A 596-amino-acid polypeptide reads, in one-letter code: MKHIRNFSIIAHIDHGKSTLSDRLIQVCGGLTDREMDSQVLDSMDLERERGITIKAQSVTLDYKAKDGQVYQLNFIDTPGHVDFSYEVSRSLAACEGALLVVDAGQGVEAQTLANCYTALDMNLDVVPILNKIDLPQADPERVAAEIEDIVGIDAMDAVRCSAKTGVGVDEVLEVIVAKIPPPEGDPDAPLQALIIDSWFDNYLGVVSLVRIKHGSLKKGDKFKVMSTGQNHTADRVGIFTPKQTDKTELKTGEVGFVIAGLKEIHGAPVGDTLTLAKNGADKPLPGFKKVKPQVYAGVFPISTDEYENFRDALNKLSLNDASLFFEPESSSALGFGFRIGYLGLLHMEIVQERLEREYNLELITTAPTVVYEVVMTNGETIYVDNPSDLPAINNIEEMREPIVEANILVPKEYLGNVITLCIEKRGTQVNMVYHGNQVAVTYHLPMAEVVMDFFDRLKSTSRGYASLEYNFIRFDPADMVRLDILINGDRVDALAMVIHRSNIRHRGLALVEKMKELIPRQMFDIAIQAAVGSQIIARSTVKALRKDVTAKCYGGDVSRKKKLLNKQKEGKKRMKQVGNVEVPQEAFLAVLKLNE.

In terms of domain architecture, tr-type G spans 2-184 (KHIRNFSIIA…VIVAKIPPPE (183 aa)). GTP contacts are provided by residues 14–19 (DHGKST) and 131–134 (NKID).

Belongs to the TRAFAC class translation factor GTPase superfamily. Classic translation factor GTPase family. LepA subfamily.

It localises to the cell inner membrane. The enzyme catalyses GTP + H2O = GDP + phosphate + H(+). Required for accurate and efficient protein synthesis under certain stress conditions. May act as a fidelity factor of the translation reaction, by catalyzing a one-codon backward translocation of tRNAs on improperly translocated ribosomes. Back-translocation proceeds from a post-translocation (POST) complex to a pre-translocation (PRE) complex, thus giving elongation factor G a second chance to translocate the tRNAs correctly. Binds to ribosomes in a GTP-dependent manner. This is Elongation factor 4 from Shewanella sp. (strain W3-18-1).